The chain runs to 282 residues: Ribosome-inactivating protein bryodin II (282 aa).

Residues 1 to 21 form the signal peptide; it reads MRSIGFYSVLALYVGAHVTED. An N-linked (GlcNAc...) asparagine glycan is attached at asparagine 25. Residue glutamate 183 is part of the active site.

The protein belongs to the ribosome-inactivating protein family. Type 1 RIP subfamily.

The enzyme catalyses Endohydrolysis of the N-glycosidic bond at one specific adenosine on the 28S rRNA.. In terms of biological role, ribosome-inactivating protein of type 1, inhibits protein synthesis in animal cells. This Bryonia dioica (Red bryony) protein is Ribosome-inactivating protein bryodin II.